A 390-amino-acid chain; its full sequence is LL-diaminopimelate aminotransferase 2 (390 aa).

The substrate site is built by Y13 and G38. Pyridoxal 5'-phosphate is bound by residues Y67, 102–103 (SK), Y127, N177, Y208, and 236–238 (SLS). K103, Y127, and N177 together coordinate substrate. K239 is modified (N6-(pyridoxal phosphate)lysine). R247 contributes to the pyridoxal 5'-phosphate binding site. R365 contacts substrate.

The protein belongs to the class-I pyridoxal-phosphate-dependent aminotransferase family. LL-diaminopimelate aminotransferase subfamily. Homodimer. Requires pyridoxal 5'-phosphate as cofactor.

It catalyses the reaction (2S,6S)-2,6-diaminopimelate + 2-oxoglutarate = (S)-2,3,4,5-tetrahydrodipicolinate + L-glutamate + H2O + H(+). The protein operates within amino-acid biosynthesis; L-lysine biosynthesis via DAP pathway; LL-2,6-diaminopimelate from (S)-tetrahydrodipicolinate (aminotransferase route): step 1/1. Its function is as follows. Involved in the synthesis of meso-diaminopimelate (m-DAP or DL-DAP), required for both lysine and peptidoglycan biosynthesis. Catalyzes the direct conversion of tetrahydrodipicolinate to LL-diaminopimelate. In Nostoc sp. (strain PCC 7120 / SAG 25.82 / UTEX 2576), this protein is LL-diaminopimelate aminotransferase 2.